We begin with the raw amino-acid sequence, 171 residues long: T-cell surface glycoprotein CD3 delta chain (171 aa).

The N-terminal stretch at 1–21 (MEHSRFLSGLILAAFLSRVSP) is a signal peptide. Topologically, residues 22–104 (YEVEMEELED…NCVELDSATL (83 aa)) are extracellular. An intrachain disulfide couples C37 to C72. N-linked (GlcNAc...) asparagine glycosylation is present at N38. A helical membrane pass occupies residues 105 to 125 (AGIIVTDIIATLLLALGVYCF). Over 126–171 (AGHEMGRFSRAADTQDLLRNDQLYQPLRDRNDGQYSRLGENWARNK) the chain is Cytoplasmic. The ITAM domain maps to 138–166 (DTQDLLRNDQLYQPLRDRNDGQYSRLGEN). 2 positions are modified to phosphotyrosine: Y149 and Y160.

As to quaternary structure, the TCR-CD3 complex is composed of a CD3D/CD3E and a CD3G/CD3E heterodimers that preferentially associate with TCRalpha and TCRbeta, respectively, to form TCRalpha/CD3E/CD3G and TCRbeta/CD3G/CD3E trimers. In turn, the hexamer interacts with CD3Z homodimer to form the TCR-CD3 complex. Alternatively, TCRalpha and TCRbeta can be replaced by TCRgamma and TCRdelta. Interacts with coreceptors CD4 and CD8. In terms of processing, phosphorylated on Tyr residues after T-cell receptor triggering by LCK in association with CD4/CD8. CD3D is mostly present on T-lymphocytes with its TCR-CD3 partners. Present also in fetal NK-cells.

Its subcellular location is the cell membrane. Functionally, part of the TCR-CD3 complex present on T-lymphocyte cell surface that plays an essential role in adaptive immune response. When antigen presenting cells (APCs) activate T-cell receptor (TCR), TCR-mediated signals are transmitted across the cell membrane by the CD3 chains CD3D, CD3E, CD3G and CD3Z. All CD3 chains contain immunoreceptor tyrosine-based activation motifs (ITAMs) in their cytoplasmic domain. Upon TCR engagement, these motifs become phosphorylated by Src family protein tyrosine kinases LCK and FYN, resulting in the activation of downstream signaling pathways. In addition of this role of signal transduction in T-cell activation, CD3D plays an essential role in thymocyte differentiation. Indeed, participates in correct intracellular TCR-CD3 complex assembly and surface expression. In absence of a functional TCR-CD3 complex, thymocytes are unable to differentiate properly. Interacts with CD4 and CD8 and thus serves to establish a functional link between the TCR and coreceptors CD4 and CD8, which is needed for activation and positive selection of CD4 or CD8 T-cells. This is T-cell surface glycoprotein CD3 delta chain (CD3D) from Sus scrofa (Pig).